The chain runs to 235 residues: Orotidine 5'-phosphate decarboxylase (235 aa).

Substrate contacts are provided by residues Asp-17, Lys-39, 66–75 (DLKLHDIGNT), Thr-121, Arg-182, Gln-191, Gly-211, and Arg-212. The Proton donor role is filled by Lys-68.

It belongs to the OMP decarboxylase family. Type 1 subfamily. As to quaternary structure, homodimer.

It carries out the reaction orotidine 5'-phosphate + H(+) = UMP + CO2. It functions in the pathway pyrimidine metabolism; UMP biosynthesis via de novo pathway; UMP from orotate: step 2/2. In terms of biological role, catalyzes the decarboxylation of orotidine 5'-monophosphate (OMP) to uridine 5'-monophosphate (UMP). The chain is Orotidine 5'-phosphate decarboxylase from Rhodopseudomonas palustris (strain HaA2).